We begin with the raw amino-acid sequence, 843 residues long: Protein P (843 aa).

The interval 1–177 (MPLSYPHFRK…FCGSQYSWEQ (177 aa)) is terminal protein domain (TP). The interval 178 to 346 (ELQHGSTSLN…YCLSHIINLL (169 aa)) is spacer. 2 disordered regions span residues 228 to 255 (KQGQLANGKQGRSGRLRSRVHTPTRWPA) and 284 to 314 (EANPSLSTSKRHTSSGHAVELNSLPPSSVGS). The segment covering 239–249 (RSGRLRSRVHT) has biased composition (basic residues). The interval 347-690 (EDWGPCYEHG…YMNLYPVARQ (344 aa)) is polymerase/reverse transcriptase domain (RT). Residues 357–600 (EHHIRTPRTP…YNLHFMGYVI (244 aa)) form the Reverse transcriptase domain. Residues Asp-429, Asp-551, and Asp-552 each coordinate Mg(2+).

Belongs to the hepadnaviridae P protein family.

It catalyses the reaction DNA(n) + a 2'-deoxyribonucleoside 5'-triphosphate = DNA(n+1) + diphosphate. The catalysed reaction is Endonucleolytic cleavage to 5'-phosphomonoester.. Activated by host HSP70 and HSP40 in vitro to be able to bind the epsilon loop of the pgRNA. Because deletion of the RNase H region renders the protein partly chaperone-independent, the chaperones may be needed indirectly to relieve occlusion of the RNA-binding site by this domain. Inhibited by several reverse-transcriptase inhibitors: Lamivudine, Adefovir and Entecavir. Functionally, multifunctional enzyme that converts the viral RNA genome into dsDNA in viral cytoplasmic capsids. This enzyme displays a DNA polymerase activity that can copy either DNA or RNA templates, and a ribonuclease H (RNase H) activity that cleaves the RNA strand of RNA-DNA heteroduplexes in a partially processive 3'- to 5'-endonucleasic mode. Neo-synthesized pregenomic RNA (pgRNA) are encapsidated together with the P protein, and reverse-transcribed inside the nucleocapsid. Initiation of reverse-transcription occurs first by binding the epsilon loop on the pgRNA genome, and is initiated by protein priming, thereby the 5'-end of (-)DNA is covalently linked to P protein. Partial (+)DNA is synthesized from the (-)DNA template and generates the relaxed circular DNA (RC-DNA) genome. After budding and infection, the RC-DNA migrates in the nucleus, and is converted into a plasmid-like covalently closed circular DNA (cccDNA). The activity of P protein does not seem to be necessary for cccDNA generation, and is presumably released from (+)DNA by host nuclear DNA repair machinery. The protein is Protein P of Hepatitis B virus genotype F2 subtype adw4q (isolate Senegal/9203) (HBV-F).